The chain runs to 577 residues: Acyl-coenzyme A synthetase ACSM2A, mitochondrial (577 aa).

The N-terminal 46 residues, 1-46 (MHWLRKVQGLCTLWGTQMSSRTLYINSRQLVSLQWGHQEVPAKFNF), are a transit peptide targeting the mitochondrion. Gln139 is a binding site for CoA. ATP is bound by residues 221 to 229 (TSGTSGLPK), 359 to 364 (ESYGQT), Asp446, and Arg461. Thr364 lines the substrate pocket. CoA is bound at residue 469 to 471 (SGY). Arg472 is a substrate binding site. CoA is bound at residue Arg501. Ser513 bears the Phosphoserine mark. CoA contacts are provided by residues Lys532 and 540-542 (YPR). Lys557 lines the ATP pocket.

Belongs to the ATP-dependent AMP-binding enzyme family. In terms of assembly, monomer. The cofactor is Mg(2+). It depends on Mn(2+) as a cofactor.

It localises to the mitochondrion. It carries out the reaction a medium-chain fatty acid + ATP + CoA = a medium-chain fatty acyl-CoA + AMP + diphosphate. It catalyses the reaction benzoate + ATP + CoA = benzoyl-CoA + AMP + diphosphate. The enzyme catalyses hexanoate + ATP + CoA = hexanoyl-CoA + AMP + diphosphate. The catalysed reaction is butanoate + ATP + CoA = butanoyl-CoA + AMP + diphosphate. It carries out the reaction octanoate + ATP + CoA = octanoyl-CoA + AMP + diphosphate. It catalyses the reaction decanoate + ATP + CoA = decanoyl-CoA + AMP + diphosphate. Functionally, catalyzes the activation of fatty acids by CoA to produce an acyl-CoA, the first step in fatty acid metabolism. Capable of activating medium-chain fatty acids (e.g. butyric (C4) to decanoic (C10) acids), and certain carboxylate-containing xenobiotics, e.g. benzoate. The polypeptide is Acyl-coenzyme A synthetase ACSM2A, mitochondrial (ACSM2A) (Homo sapiens (Human)).